Here is a 62-residue protein sequence, read N- to C-terminus: Potassium channel toxin kappa-KTx 1.4 (62 aa).

The N-terminal stretch at 1-26 is a signal peptide; that stretch reads MKSCLINVSLLILLLLPILGYASVNA. The propeptide occupies 27-38; it reads ESIDGENDFEEE. Cystine bridges form between Cys43–Cys61 and Cys47–Cys57.

Belongs to the short scorpion toxin superfamily. Potassium channel inhibitor kappa-KTx family. Kappa-KTx 1 subfamily. As to expression, expressed by the venom gland.

Its subcellular location is the secreted. Shows structural homology with WaTx suggesting that it acts as a cell-penetrating peptide (CPP) with defensive purpose that induces pain by specifically activating mammalian sensory neuron TRPA1 channels. Has no effect on the voltage-gated potassium channels tested. The polypeptide is Potassium channel toxin kappa-KTx 1.4 (Heterometrus petersii (Asian forest scorpion)).